Reading from the N-terminus, the 115-residue chain is U3-lycotoxin-Ls1a (115 aa).

The signal sequence occupies residues 1 to 20 (MKFVLLFGVFLVTLFSYSSA). Residues 21–44 (EMLDDFGQADEDELLSLIEKEEAR) constitute a propeptide that is removed on maturation. Cystine bridges form between cysteine 48-cysteine 63, cysteine 55-cysteine 72, cysteine 62-cysteine 87, and cysteine 74-cysteine 85.

The protein belongs to the neurotoxin 19 (CSTX) family. 01 subfamily. Expressed by the venom gland.

The protein localises to the secreted. In Lycosa singoriensis (Wolf spider), this protein is U3-lycotoxin-Ls1a.